Here is a 723-residue protein sequence, read N- to C-terminus: Polyribonucleotide nucleotidyltransferase (723 aa).

Residues Asp488 and Asp494 each contribute to the Mg(2+) site. The 60-residue stretch at 555-614 (PKIITLNIKPEKIKDVIGPGGKQINAIIDETGVKIDIEQDGTVYIASQDQAMNRKAIAII) folds into the KH domain. The S1 motif domain occupies 624-692 (GEVYTGKVRR…QQGRVNLSRK (69 aa)). The tract at residues 692–723 (KALLEKKEQPEGDKKPQAEKKFYPKTKKPESK) is disordered. Positions 693–723 (ALLEKKEQPEGDKKPQAEKKFYPKTKKPESK) are enriched in basic and acidic residues.

It belongs to the polyribonucleotide nucleotidyltransferase family. The cofactor is Mg(2+).

The protein localises to the cytoplasm. The catalysed reaction is RNA(n+1) + phosphate = RNA(n) + a ribonucleoside 5'-diphosphate. Its function is as follows. Involved in mRNA degradation. Catalyzes the phosphorolysis of single-stranded polyribonucleotides processively in the 3'- to 5'-direction. The protein is Polyribonucleotide nucleotidyltransferase of Listeria monocytogenes serotype 4a (strain HCC23).